The sequence spans 258 residues: Deoxyribose-phosphate aldolase (258 aa).

The active-site Proton donor/acceptor is the Asp101. The active-site Schiff-base intermediate with acetaldehyde is the Lys166. The active-site Proton donor/acceptor is Lys200.

Belongs to the DeoC/FbaB aldolase family. DeoC type 2 subfamily.

The protein resides in the cytoplasm. It catalyses the reaction 2-deoxy-D-ribose 5-phosphate = D-glyceraldehyde 3-phosphate + acetaldehyde. Its pathway is carbohydrate degradation; 2-deoxy-D-ribose 1-phosphate degradation; D-glyceraldehyde 3-phosphate and acetaldehyde from 2-deoxy-alpha-D-ribose 1-phosphate: step 2/2. Functionally, catalyzes a reversible aldol reaction between acetaldehyde and D-glyceraldehyde 3-phosphate to generate 2-deoxy-D-ribose 5-phosphate. This chain is Deoxyribose-phosphate aldolase, found in Actinobacillus pleuropneumoniae serotype 7 (strain AP76).